The primary structure comprises 216 residues: Probable nicotinate-nucleotide adenylyltransferase (216 aa).

Belongs to the NadD family.

The catalysed reaction is nicotinate beta-D-ribonucleotide + ATP + H(+) = deamido-NAD(+) + diphosphate. It participates in cofactor biosynthesis; NAD(+) biosynthesis; deamido-NAD(+) from nicotinate D-ribonucleotide: step 1/1. Catalyzes the reversible adenylation of nicotinate mononucleotide (NaMN) to nicotinic acid adenine dinucleotide (NaAD). This chain is Probable nicotinate-nucleotide adenylyltransferase, found in Geobacillus kaustophilus (strain HTA426).